A 440-amino-acid chain; its full sequence is Thymidine phosphorylase (440 aa).

The protein belongs to the thymidine/pyrimidine-nucleoside phosphorylase family. Homodimer.

The catalysed reaction is thymidine + phosphate = 2-deoxy-alpha-D-ribose 1-phosphate + thymine. The protein operates within pyrimidine metabolism; dTMP biosynthesis via salvage pathway; dTMP from thymine: step 1/2. Functionally, the enzymes which catalyze the reversible phosphorolysis of pyrimidine nucleosides are involved in the degradation of these compounds and in their utilization as carbon and energy sources, or in the rescue of pyrimidine bases for nucleotide synthesis. This is Thymidine phosphorylase from Salmonella schwarzengrund (strain CVM19633).